We begin with the raw amino-acid sequence, 153 residues long: NAD(P)H-quinone oxidoreductase subunit N (153 aa).

Belongs to the complex I NdhN subunit family. NDH-1 can be composed of about 15 different subunits; different subcomplexes with different compositions have been identified which probably have different functions.

It is found in the cellular thylakoid membrane. It carries out the reaction a plastoquinone + NADH + (n+1) H(+)(in) = a plastoquinol + NAD(+) + n H(+)(out). It catalyses the reaction a plastoquinone + NADPH + (n+1) H(+)(in) = a plastoquinol + NADP(+) + n H(+)(out). NDH-1 shuttles electrons from an unknown electron donor, via FMN and iron-sulfur (Fe-S) centers, to quinones in the respiratory and/or the photosynthetic chain. The immediate electron acceptor for the enzyme in this species is believed to be plastoquinone. Couples the redox reaction to proton translocation, and thus conserves the redox energy in a proton gradient. Cyanobacterial NDH-1 also plays a role in inorganic carbon-concentration. In Parasynechococcus marenigrum (strain WH8102), this protein is NAD(P)H-quinone oxidoreductase subunit N.